Reading from the N-terminus, the 654-residue chain is MFDTVLVANRGEIAVRVIRTLRRLGIRSVAVYSDPDVDARHVLEADAAVRLGPAPARESYLDIGKVLDAAARTGAQAIHPGYGFLAENADFAAACERARVVFLGPPARAIEVMGDKIAAKNAVAAFDVPVVPGVARAGLTDDALVTAAAEVGYPVLIKPSAGGGGKGMRLVQDPARLPEALVSARREAMSSFGDDTLFLERFVLRPRHIEVQVLADAHGNVVHLGERECSLQRRHQKVIEEAPSPLLDPQTRERIGVAACNTARCVDYVGAGTVEFIVSAQRPDEFFFMEMNTRLQVEHPVTEAITGLDLVEWQLRVGAGEKLGFAQNDIELRGHAIEARVYAEDPAREFLPTGGRVLAVFEPAGPGVRVDSSLLGGTVVGSDYDPLLTKVIAHGADREEALDRLDQALARTAVLGVQTNVEFLRFLLADERVRVGDLDTAVLDERSADFTARPAPDDVLAAGGLYRQWALARRAQGDLWAAPSGWRGGGHMAPVRTAMRTPLRSETVSVWGPPESAQVQVGDGEIDCASVQVTREQMSVTISGLRRDYRWAEADRHLWIADERGTWHLREAEEHKIHRAVGARPAEVVSPMPGSVIAVQVESGSQISAGDVVVVVEAMKMEHSLEAPVSGRVQVLVSVGDQVKVEQVLARIKD.

Residues 1-448 form the Biotin carboxylation domain; sequence MFDTVLVANR…DTAVLDERSA (448 aa). One can recognise an ATP-grasp domain in the interval 120-319; the sequence is KNAVAAFDVP…LVEWQLRVGA (200 aa). 148-209 contacts ATP; sequence AAEVGYPVLI…ERFVLRPRHI (62 aa). Residues glutamate 275, glutamate 290, and asparagine 292 each contribute to the Mg(2+) site. The Mn(2+) site is built by glutamate 275, glutamate 290, and asparagine 292. In terms of domain architecture, Biotinyl-binding spans 578-653; the sequence is HRAVGARPAE…KVEQVLARIK (76 aa). Lysine 620 carries the N6-biotinyllysine modification.

In terms of assembly, the biotin-dependent acyl-CoA carboxylase complex is composed of AccA1, which contains the biotin carboxylase (BC) and biotin carboxyl carrier protein (BCCP) domains, and AccD1, which contains the carboxyl transferase (CT) domain. The AccA1/AccD1 complex forms a dodecamer. Requires Mg(2+) as cofactor. Mn(2+) serves as cofactor. The cofactor is biotin.

The catalysed reaction is N(6)-biotinyl-L-lysyl-[protein] + hydrogencarbonate + ATP = N(6)-carboxybiotinyl-L-lysyl-[protein] + ADP + phosphate + H(+). It functions in the pathway amino-acid degradation; L-leucine degradation. Its function is as follows. Component of a biotin-dependent acyl-CoA carboxylase complex. This subunit catalyzes the ATP-dependent carboxylation of the biotin carried by the biotin carboxyl carrier (BCC) domain, resulting in the formation of carboxyl biotin. When associated with the beta1 subunit AccD1, is involved in branched amino-acid catabolism with methylcrotonyl coenzyme A as the substrate. In Mycobacterium bovis (strain ATCC BAA-935 / AF2122/97), this protein is Biotin-dependent 3-methylcrotonyl-coenzyme A carboxylase alpha1 subunit (accA1).